The chain runs to 230 residues: Proteasome subunit beta 2 (230 aa).

Over residues 1 to 10 (MHDPENRLTD) the composition is skewed to basic and acidic residues. The disordered stretch occupies residues 1-29 (MHDPENRLTDAYEPEVGNLPNEDSGRDEE). Residues 1 to 35 (MHDPENRLTDAYEPEVGNLPNEDSGRDEENVVKTG) constitute a propeptide, removed in mature form; by autocatalysis. Thr36 serves as the catalytic Nucleophile.

Belongs to the peptidase T1B family. In terms of assembly, the 20S proteasome core is composed of 14 alpha and 14 beta subunits that assemble into four stacked heptameric rings, resulting in a barrel-shaped structure. The two inner rings, each composed of seven catalytic beta subunits, are sandwiched by two outer rings, each composed of seven alpha subunits. The catalytic chamber with the active sites is on the inside of the barrel. Has a gated structure, the ends of the cylinder being occluded by the N-termini of the alpha-subunits. Is capped at one or both ends by the proteasome regulatory ATPase, PAN.

It localises to the cytoplasm. The catalysed reaction is Cleavage of peptide bonds with very broad specificity.. With respect to regulation, the formation of the proteasomal ATPase PAN-20S proteasome complex, via the docking of the C-termini of PAN into the intersubunit pockets in the alpha-rings, triggers opening of the gate for substrate entry. Interconversion between the open-gate and close-gate conformations leads to a dynamic regulation of the 20S proteasome proteolysis activity. Its function is as follows. Component of the proteasome core, a large protease complex with broad specificity involved in protein degradation. The polypeptide is Proteasome subunit beta 2 (Haloarcula marismortui (strain ATCC 43049 / DSM 3752 / JCM 8966 / VKM B-1809) (Halobacterium marismortui)).